A 312-amino-acid chain; its full sequence is Phosphatidate cytidylyltransferase (312 aa).

The disordered stretch occupies residues 1 to 31; sequence MASTDPGTGTPLDESVPGIKRAMRQSTKNTP. 8 consecutive transmembrane segments (helical) span residues 37–57, 58–78, 85–105, 110–130, 157–177, 186–206, 223–243, and 247–267; these read LPAA…TLVF, APRI…HEVV, GYVI…WLTW, VGAL…RLVM, ATVF…LLVY, FCLM…GVLF, GFAG…TFLA, and PWVG…GDLV.

It belongs to the CDS family.

The protein localises to the cell membrane. It carries out the reaction a 1,2-diacyl-sn-glycero-3-phosphate + CTP + H(+) = a CDP-1,2-diacyl-sn-glycerol + diphosphate. It functions in the pathway phospholipid metabolism; CDP-diacylglycerol biosynthesis; CDP-diacylglycerol from sn-glycerol 3-phosphate: step 3/3. The sequence is that of Phosphatidate cytidylyltransferase (cdsA) from Mycobacterium leprae (strain TN).